The chain runs to 299 residues: Regucalcin (299 aa).

Glu-18 contacts a divalent metal cation. The substrate site is built by Arg-101, Asn-103, and Glu-121. Lys-144 is subject to N6-succinyllysine. Residues Asn-154 and Asp-204 each coordinate a divalent metal cation. Residue Asp-204 is the Proton donor/acceptor of the active site. An N6-succinyllysine mark is found at Lys-244 and Lys-253.

It belongs to the SMP-30/CGR1 family. In terms of assembly, monomer. Zn(2+) is required as a cofactor. The cofactor is Mn(2+). Requires Ca(2+) as cofactor. Mg(2+) serves as cofactor.

It localises to the cytoplasm. It catalyses the reaction D-glucono-1,5-lactone + H2O = D-gluconate + H(+). Functionally, gluconolactonase with low activity towards other sugar lactones, including gulonolactone and galactonolactone. Can also hydrolyze diisopropyl phosphorofluoridate and phenylacetate (in vitro). Calcium-binding protein. Modulates Ca(2+) signaling, and Ca(2+)-dependent cellular processes and enzyme activities. This is Regucalcin (RGN) from Pongo abelii (Sumatran orangutan).